The primary structure comprises 498 residues: Phosphatidylserine synthase (498 aa).

A disordered region spans residues 1 to 65; the sequence is MKKRTNSRGT…GSVSSAGARR (65 aa). The Cytoplasmic portion of the chain corresponds to 1-92; the sequence is MKKRTNSRGT…VDDISLDFFY (92 aa). A compositionally biased stretch (polar residues) spans 7–25; that stretch reads SRGTPTSSGDALLDTSFSS. Residues 93-113 form a helical membrane-spanning segment; that stretch reads KPHTITLLAVSVLAVMYFAFV. The Lumenal segment spans residues 114 to 122; the sequence is RNEANVDEN. The helical transmembrane segment at 123-143 threads the bilayer; it reads LWAGLLCIVFFFLIVSVIAFP. Residues 144 to 153 are Cytoplasmic-facing; sequence NGPFTRPHPA. Residues 154–174 form a helical membrane-spanning segment; that stretch reads VWRILFGCSVLYLLTLQFLMF. Residues 175–239 lie on the Lumenal side of the membrane; sequence QNYPTIRSIF…AFKAILIRHM (65 aa). The N-linked (GlcNAc...) asparagine glycan is linked to asparagine 205. A helical transmembrane segment spans residues 240 to 260; the sequence is GILWAISVMWEITEITFAHLL. Residues 261 to 266 lie on the Cytoplasmic side of the membrane; sequence PNFIEC. Residues 267 to 287 traverse the membrane as a helical segment; sequence WWDALILDVIICNGLGIWMGL. The Lumenal portion of the chain corresponds to 288–339; it reads KICQILEMREYKWASIKDISTTTGKIKRAMLQFTPESWSAIRWLDPKSTAMR. Residues 340-360 form a helical membrane-spanning segment; it reads FAAVIQLVIFWQVTELNTFFL. The Cytoplasmic portion of the chain corresponds to 361-367; sequence KHIFEMP. A helical transmembrane segment spans residues 368-388; that stretch reads PDHFIVIGRLIFIGLFVAPSV. Topologically, residues 389 to 402 are lumenal; the sequence is RQYYVYVTDTRCKR. Residues 403–423 form a helical membrane-spanning segment; it reads VGTQCWVYGAIMVSEAILCIK. Topologically, residues 424-436 are cytoplasmic; it reads NGKELFERTQAIN. The helical transmembrane segment at 437 to 457 threads the bilayer; the sequence is IVLWLTVQVIISVAFVYLAVY. Over 458–498 the chain is Lumenal; it reads WQQRQLKKVSSTPAKTKETIPASSSSPSKGKLSPQKEKKLK. Residues 465-498 are disordered; it reads KVSSTPAKTKETIPASSSSPSKGKLSPQKEKKLK. Over residues 478–490 the composition is skewed to low complexity; that stretch reads PASSSSPSKGKLS.

The protein belongs to the phosphatidyl serine synthase family.

It localises to the endoplasmic reticulum membrane. The catalysed reaction is a 1,2-diacyl-sn-glycero-3-phosphoethanolamine + L-serine = a 1,2-diacyl-sn-glycero-3-phospho-L-serine + ethanolamine. It participates in phospholipid metabolism; phosphatidylserine biosynthesis. Catalyzes a base-exchange reaction in which the polar head group of phosphatidylethanolamine (PE) is replaced by L-serine. This chain is Phosphatidylserine synthase, found in Drosophila melanogaster (Fruit fly).